Consider the following 835-residue polypeptide: Disease resistance protein RPP13 (835 aa).

A coiled-coil region spans residues methionine 25–isoleucine 41. The NB-ARC domain occupies serine 144 to glutamate 453. Glycine 192–threonine 199 is an ATP binding site.

Belongs to the disease resistance NB-LRR family. RPP13 subfamily.

Its function is as follows. Disease resistance protein. Resistance proteins guard the plant against pathogens that contain an appropriate avirulence protein via an indirect interaction with this avirulence protein. That triggers a defense system including the hypersensitive response, which restricts the pathogen growth. In contrast to other resistance proteins, it works independently of ESD1 and NSD1 proteins and does not require the accumulation of salicylic acid, suggesting the existence of an independent signaling pathway. The specificity to avirulence proteins differs in the different cultivars. In Arabidopsis thaliana (Mouse-ear cress), this protein is Disease resistance protein RPP13 (RPP13).